We begin with the raw amino-acid sequence, 455 residues long: Glutamyl-tRNA(Gln) amidotransferase subunit A (455 aa).

Residues lysine 74 and serine 149 each act as charge relay system in the active site. Serine 173 (acyl-ester intermediate) is an active-site residue.

The protein belongs to the amidase family. GatA subfamily. Heterotrimer of A, B and C subunits.

The enzyme catalyses L-glutamyl-tRNA(Gln) + L-glutamine + ATP + H2O = L-glutaminyl-tRNA(Gln) + L-glutamate + ADP + phosphate + H(+). Allows the formation of correctly charged Gln-tRNA(Gln) through the transamidation of misacylated Glu-tRNA(Gln) in organisms which lack glutaminyl-tRNA synthetase. The reaction takes place in the presence of glutamine and ATP through an activated gamma-phospho-Glu-tRNA(Gln). The polypeptide is Glutamyl-tRNA(Gln) amidotransferase subunit A (Methanosphaera stadtmanae (strain ATCC 43021 / DSM 3091 / JCM 11832 / MCB-3)).